A 193-amino-acid polypeptide reads, in one-letter code: dCTP deaminase (193 aa).

Residues 110-115 (RSSLAR), aspartate 128, 136-138 (VLE), tyrosine 171, lysine 178, and glutamine 182 each bind dCTP. Residue glutamate 138 is the Proton donor/acceptor of the active site.

This sequence belongs to the dCTP deaminase family. As to quaternary structure, homotrimer.

It carries out the reaction dCTP + H2O + H(+) = dUTP + NH4(+). It functions in the pathway pyrimidine metabolism; dUMP biosynthesis; dUMP from dCTP (dUTP route): step 1/2. Catalyzes the deamination of dCTP to dUTP. The polypeptide is dCTP deaminase (Buchnera aphidicola subsp. Acyrthosiphon pisum (strain APS) (Acyrthosiphon pisum symbiotic bacterium)).